A 136-amino-acid polypeptide reads, in one-letter code: ATP synthase epsilon chain (136 aa).

It belongs to the ATPase epsilon chain family. F-type ATPases have 2 components, CF(1) - the catalytic core - and CF(0) - the membrane proton channel. CF(1) has five subunits: alpha(3), beta(3), gamma(1), delta(1), epsilon(1). CF(0) has three main subunits: a, b and c.

It localises to the cell membrane. In terms of biological role, produces ATP from ADP in the presence of a proton gradient across the membrane. This is ATP synthase epsilon chain from Ureaplasma parvum serovar 3 (strain ATCC 27815 / 27 / NCTC 11736).